Consider the following 484-residue polypeptide: MKKNFILNFATKNVKEKKLSFGVGITLWALIVFAYMIFVMNWGFASAGLNGKAGISGYLGHFFPNANEAPGTVVNQAVNWGITIGRGIGSVLVGWLIVKISHKYTVILSLFFMLFGIIAPYSPTYAGFIILRTIFAIGGTMQIILIQPVVSNYLNQRQKAVISQFSPFFYPIGTIITLIPFAGIIGQEAQKAFRDNWQIVFLVIGLLTLIPLIGYIILGTKFDLYPSNIEKRNKQEKLSLATFFKQKDTWYWTILYGSWLVAVVFPFTFSKPIFHRLIGDSDGTFNDKISVFLIFFLAGMFLGPFTIGLLSKYQLQRRKYISTIITLGVFFYVLATVVFVLKVGKNYEYAKSYTDGWTWLFLFLGLFMGICLWGIQGVMLNLPHEYKGSNPYRVGFQFGLIWGLGYTAFTIATIITSLVNTPPGIDLKKLELNNVDGYALGAYILIIIFSLVSSIGLALLKEPNPEYKKLLKIRSFSEIERIKK.

The next 12 membrane-spanning stretches (helical) occupy residues L19–V39, V78–V98, F111–L131, I134–L154, F165–I185, I199–G219, T249–F269, I289–L309, I321–L341, L360–L380, F398–L418, and L440–L460.

It localises to the cell membrane. This is an uncharacterized protein from Mesomycoplasma hyopneumoniae (strain 232) (Mycoplasma hyopneumoniae).